The primary structure comprises 296 residues: 4-hydroxybenzoate octaprenyltransferase (296 aa).

8 consecutive transmembrane segments (helical) span residues 28–48 (IGTL…SDGI), 51–71 (LAVL…GCVI), 102–122 (LLLT…LNHL), 143–163 (FFPI…PMAF), 174–194 (AWIL…VYAM), 212–232 (FGRY…LLMA), 233–253 (VLGA…IVLL), and 274–294 (FLAN…HTFF).

It belongs to the UbiA prenyltransferase family. Requires Mg(2+) as cofactor.

Its subcellular location is the cell inner membrane. The enzyme catalyses all-trans-octaprenyl diphosphate + 4-hydroxybenzoate = 4-hydroxy-3-(all-trans-octaprenyl)benzoate + diphosphate. It functions in the pathway cofactor biosynthesis; ubiquinone biosynthesis. Its function is as follows. Catalyzes the prenylation of para-hydroxybenzoate (PHB) with an all-trans polyprenyl group. Mediates the second step in the final reaction sequence of ubiquinone-8 (UQ-8) biosynthesis, which is the condensation of the polyisoprenoid side chain with PHB, generating the first membrane-bound Q intermediate 3-octaprenyl-4-hydroxybenzoate. In Neisseria gonorrhoeae (strain ATCC 700825 / FA 1090), this protein is 4-hydroxybenzoate octaprenyltransferase.